Reading from the N-terminus, the 90-residue chain is UPF0367 protein P9301_01411 (90 aa).

The protein belongs to the UPF0367 family.

This Prochlorococcus marinus (strain MIT 9301) protein is UPF0367 protein P9301_01411.